A 181-amino-acid chain; its full sequence is Segregation and condensation protein B (181 aa).

The protein belongs to the ScpB family. Homodimer. Homodimerization may be required to stabilize the binding of ScpA to the Smc head domains. Component of a cohesin-like complex composed of ScpA, ScpB and the Smc homodimer, in which ScpA and ScpB bind to the head domain of Smc. The presence of the three proteins is required for the association of the complex with DNA.

Its subcellular location is the cytoplasm. Functionally, participates in chromosomal partition during cell division. May act via the formation of a condensin-like complex containing Smc and ScpA that pull DNA away from mid-cell into both cell halves. The chain is Segregation and condensation protein B from Desulforamulus reducens (strain ATCC BAA-1160 / DSM 100696 / MI-1) (Desulfotomaculum reducens).